We begin with the raw amino-acid sequence, 907 residues long: NADH-quinone oxidoreductase subunit G (907 aa).

The 2Fe-2S ferredoxin-type domain maps to 1–83 (MTIIFVDNEE…GMIVSTSDKI (83 aa)). The [2Fe-2S] cluster site is built by cysteine 34, cysteine 45, cysteine 48, and cysteine 67. The 40-residue stretch at 83–122 (ISRNFRKGIIELLMLNHPHDCPICEEGGSCHLQDMTVMAG) folds into the 4Fe-4S His(Cys)3-ligated-type domain. [4Fe-4S] cluster-binding residues include histidine 99, cysteine 103, cysteine 106, cysteine 112, cysteine 151, cysteine 154, cysteine 157, cysteine 201, cysteine 228, cysteine 231, cysteine 235, and cysteine 263. The 4Fe-4S Mo/W bis-MGD-type domain occupies 221–277 (MQYAPSICQHCCVGCNISVGEKYGKISRIENRYHNAINHYFLCDLGRFSYDYSNVDE).

The protein belongs to the complex I 75 kDa subunit family. Composed of 13 different subunits. Subunits NuoCD, E, F, and G constitute the peripheral sector of the complex. Requires [2Fe-2S] cluster as cofactor. [4Fe-4S] cluster serves as cofactor.

It carries out the reaction a quinone + NADH + 5 H(+)(in) = a quinol + NAD(+) + 4 H(+)(out). Functionally, NDH-1 shuttles electrons from NADH, via FMN and iron-sulfur (Fe-S) centers, to quinones in the respiratory chain. Couples the redox reaction to proton translocation (for every two electrons transferred, four hydrogen ions are translocated across the cytoplasmic membrane), and thus conserves the redox energy in a proton gradient. The polypeptide is NADH-quinone oxidoreductase subunit G (nuoG) (Buchnera aphidicola subsp. Baizongia pistaciae (strain Bp)).